Reading from the N-terminus, the 463-residue chain is MKTRTEKDTFGPIEVPEQHLWGAQTQRSLHFFAISTEKMPVPLVAAMARLKRAAAKVNAELGELDPQVADAIMRAADEVVAGKWPDEFPLSVWQTGSGTQSNMNMNEVLANRASELLGGERGEGRKVHPNDHVNRGQSSNDTFPTAMHVAAAVEVEHRVLPALKALRGTLAAKSAAFYDIVKIGRTHLQDATPLTLGQEISGYVAQLDLAEQQIRATLAGLHQLAIGGTAVGTGLNAHPQFSAKVSAELAHDTGSAFVSAPNKFQALASHEALLFAHGALKTLAAGLMKIANDVRWLASGPRSGLGEISIPENEPGSSIMPGKVNPTQCEAVTMLAAQVMGNDVAINVGGASGNFELNVFKPLVIHNFLQSVRLLADGMVSFDKHCAAGIEPNRERITELVERSLMLVTALNPHIGYDKAAQIAKKAHKENLSLKEAALALGHLTEAQFAEWVVPGDMTNARR.

Residues serine 97–threonine 99, arginine 125, histidine 128–aspartate 131, serine 138–asparagine 140, and threonine 186 each bind substrate. Positions arginine 121 to asparagine 134 are enriched in basic and acidic residues. A disordered region spans residues arginine 121–threonine 142. Histidine 187 acts as the Proton donor/acceptor in catalysis. The active site involves serine 317. Substrate contacts are provided by residues serine 318 and lysine 323–asparagine 325.

Belongs to the class-II fumarase/aspartase family. Fumarase subfamily. As to quaternary structure, homotetramer.

The protein localises to the cytoplasm. The enzyme catalyses (S)-malate = fumarate + H2O. The protein operates within carbohydrate metabolism; tricarboxylic acid cycle; (S)-malate from fumarate: step 1/1. Involved in the TCA cycle. Catalyzes the stereospecific interconversion of fumarate to L-malate. In Bordetella bronchiseptica (strain ATCC BAA-588 / NCTC 13252 / RB50) (Alcaligenes bronchisepticus), this protein is Fumarate hydratase class II.